The sequence spans 878 residues: Alanine--tRNA ligase (878 aa).

4 residues coordinate Zn(2+): His-566, His-570, Cys-668, and His-672.

This sequence belongs to the class-II aminoacyl-tRNA synthetase family. Zn(2+) serves as cofactor.

The protein resides in the cytoplasm. It carries out the reaction tRNA(Ala) + L-alanine + ATP = L-alanyl-tRNA(Ala) + AMP + diphosphate. In terms of biological role, catalyzes the attachment of alanine to tRNA(Ala) in a two-step reaction: alanine is first activated by ATP to form Ala-AMP and then transferred to the acceptor end of tRNA(Ala). Also edits incorrectly charged Ser-tRNA(Ala) and Gly-tRNA(Ala) via its editing domain. This chain is Alanine--tRNA ligase, found in Bacillus subtilis (strain 168).